A 461-amino-acid chain; its full sequence is 3-isopropylmalate dehydratase large subunit (461 aa).

The [4Fe-4S] cluster site is built by Cys-338, Cys-398, and Cys-401.

It belongs to the aconitase/IPM isomerase family. LeuC type 1 subfamily. As to quaternary structure, heterodimer of LeuC and LeuD. The cofactor is [4Fe-4S] cluster.

The enzyme catalyses (2R,3S)-3-isopropylmalate = (2S)-2-isopropylmalate. The protein operates within amino-acid biosynthesis; L-leucine biosynthesis; L-leucine from 3-methyl-2-oxobutanoate: step 2/4. Catalyzes the isomerization between 2-isopropylmalate and 3-isopropylmalate, via the formation of 2-isopropylmaleate. This Streptococcus mutans serotype c (strain ATCC 700610 / UA159) protein is 3-isopropylmalate dehydratase large subunit.